A 290-amino-acid polypeptide reads, in one-letter code: Bifunctional protein FolD (290 aa).

Residues 174 to 176, Ile199, and Ile240 each bind NADP(+); that span reads GHS.

This sequence belongs to the tetrahydrofolate dehydrogenase/cyclohydrolase family. Homodimer.

The catalysed reaction is (6R)-5,10-methylene-5,6,7,8-tetrahydrofolate + NADP(+) = (6R)-5,10-methenyltetrahydrofolate + NADPH. The enzyme catalyses (6R)-5,10-methenyltetrahydrofolate + H2O = (6R)-10-formyltetrahydrofolate + H(+). It participates in one-carbon metabolism; tetrahydrofolate interconversion. Catalyzes the oxidation of 5,10-methylenetetrahydrofolate to 5,10-methenyltetrahydrofolate and then the hydrolysis of 5,10-methenyltetrahydrofolate to 10-formyltetrahydrofolate. In Methanosarcina acetivorans (strain ATCC 35395 / DSM 2834 / JCM 12185 / C2A), this protein is Bifunctional protein FolD.